A 126-amino-acid polypeptide reads, in one-letter code: uncharacterized protein (126 aa).

This is an uncharacterized protein from Methanocaldococcus jannaschii (strain ATCC 43067 / DSM 2661 / JAL-1 / JCM 10045 / NBRC 100440) (Methanococcus jannaschii).